The sequence spans 356 residues: Protein RecA (356 aa).

Position 75-82 (75-82) interacts with ATP; it reads GPESSGKT.

The protein belongs to the RecA family.

It localises to the cytoplasm. In terms of biological role, can catalyze the hydrolysis of ATP in the presence of single-stranded DNA, the ATP-dependent uptake of single-stranded DNA by duplex DNA, and the ATP-dependent hybridization of homologous single-stranded DNAs. It interacts with LexA causing its activation and leading to its autocatalytic cleavage. In Burkholderia mallei (strain ATCC 23344), this protein is Protein RecA.